The sequence spans 407 residues: Indoleamine 2,3-dioxygenase 1 (407 aa).

Residue His-350 coordinates heme b. The disordered stretch occupies residues 362–388 (SKQKPMGGHKSEEPSNTENRGTGGTDV).

Belongs to the indoleamine 2,3-dioxygenase family. In terms of assembly, monomer. The cofactor is heme b.

It localises to the cytoplasm. It is found in the cytosol. It catalyses the reaction D-tryptophan + O2 = N-formyl-D-kynurenine. It carries out the reaction L-tryptophan + O2 = N-formyl-L-kynurenine. Activity is inhibited by and MTH-trp (methylthiohydantoin-DL-tryptophan), modestly inhibited by L-1MT (1-methyl-L-tryptophan) but not D-1MT (1-methyl-D-tryptophan). Its function is as follows. Catalyzes the first and rate limiting step of the catabolism of the essential amino acid tryptophan along the kynurenine pathway. Involved in the peripheral immune tolerance, contributing to maintain homeostasis by preventing autoimmunity or immunopathology that would result from uncontrolled and overreacting immune responses. Tryptophan shortage inhibits T lymphocytes division and accumulation of tryptophan catabolites induces T-cell apoptosis and differentiation of regulatory T-cells. Acts as a suppressor of anti-tumor immunity. Limits the growth of intracellular pathogens by depriving tryptophan. Protects the fetus from maternal immune rejection. The polypeptide is Indoleamine 2,3-dioxygenase 1 (Rattus norvegicus (Rat)).